A 721-amino-acid chain; its full sequence is Polyphosphate kinase (721 aa).

Asparagine 54 provides a ligand contact to ATP. Mg(2+) contacts are provided by arginine 379 and arginine 409. Residues 434–468 form the PLD phosphodiesterase domain; it reads THLKTHSKIALVVKRIGGELTSFVHLGTGNYNDKT. Histidine 439 (phosphohistidine intermediate) is an active-site residue. 3 residues coordinate ATP: tyrosine 472, arginine 568, and histidine 596.

Belongs to the polyphosphate kinase 1 (PPK1) family. It depends on Mg(2+) as a cofactor. In terms of processing, an intermediate of this reaction is the autophosphorylated ppk in which a phosphate is covalently linked to a histidine residue through a N-P bond.

It catalyses the reaction [phosphate](n) + ATP = [phosphate](n+1) + ADP. Catalyzes the reversible transfer of the terminal phosphate of ATP to form a long-chain polyphosphate (polyP). This chain is Polyphosphate kinase, found in Staphylococcus haemolyticus (strain JCSC1435).